The primary structure comprises 100 residues: uncharacterized protein (100 aa).

Positions 65–91 (DDRERHLSATGERRREQGFGTSRRKDP) are enriched in basic and acidic residues. The tract at residues 65–100 (DDRERHLSATGERRREQGFGTSRRKDPSLYNWSDVK) is disordered.

It belongs to the chlamydial CPn_0121/CT_031/TC_0300 family.

This is an uncharacterized protein from Chlamydia trachomatis serovar D (strain ATCC VR-885 / DSM 19411 / UW-3/Cx).